The following is a 558-amino-acid chain: Serine palmitoyltransferase 2 (558 aa).

A compositionally biased stretch (acidic residues) spans 33–42 (HDDDEEEEEV). Positions 33–57 (HDDDEEEEEVKVDQGSEETTSSHDI) are disordered. Residue K384 is modified to N6-(pyridoxal phosphate)lysine.

Belongs to the class-II pyridoxal-phosphate-dependent aminotransferase family. In terms of assembly, heterodimer of sptl-1/sptl-2. The cofactor is pyridoxal 5'-phosphate.

The enzyme catalyses L-serine + hexadecanoyl-CoA + H(+) = 3-oxosphinganine + CO2 + CoA. It participates in lipid metabolism; sphingolipid metabolism. Component of the serine palmitoyltransferase (SPT) that catalyzes the first committed step in sphingolipid biosynthesis, which is the condensation of an acyl-CoA species and L-serine. The catalytic core is composed of a heterodimer of sptl-1 and sptl-2 or sptl-1 and sptl-3. Required for the specification of abicobasal polarity and development of the gut lumen. The chain is Serine palmitoyltransferase 2 (sptl-2) from Caenorhabditis elegans.